Here is a 297-residue protein sequence, read N- to C-terminus: N-acetylmuramic acid 6-phosphate etherase (297 aa).

One can recognise an SIS domain in the interval 55 to 218 (ITKHFKQGGR…STGAMVGIGK (164 aa)). The Proton donor role is filled by glutamate 83. Residue glutamate 114 is part of the active site.

Belongs to the GCKR-like family. MurNAc-6-P etherase subfamily. Homodimer.

The enzyme catalyses N-acetyl-D-muramate 6-phosphate + H2O = N-acetyl-D-glucosamine 6-phosphate + (R)-lactate. The protein operates within amino-sugar metabolism; N-acetylmuramate degradation. Its function is as follows. Specifically catalyzes the cleavage of the D-lactyl ether substituent of MurNAc 6-phosphate, producing GlcNAc 6-phosphate and D-lactate. The protein is N-acetylmuramic acid 6-phosphate etherase of Oenococcus oeni (strain ATCC BAA-331 / PSU-1).